Here is a 185-residue protein sequence, read N- to C-terminus: Hypoxanthine/guanine phosphoribosyltransferase (185 aa).

This sequence belongs to the purine/pyrimidine phosphoribosyltransferase family. Archaeal HPRT subfamily. As to quaternary structure, homodimer.

It is found in the cytoplasm. The enzyme catalyses IMP + diphosphate = hypoxanthine + 5-phospho-alpha-D-ribose 1-diphosphate. It carries out the reaction GMP + diphosphate = guanine + 5-phospho-alpha-D-ribose 1-diphosphate. The protein operates within purine metabolism; IMP biosynthesis via salvage pathway; IMP from hypoxanthine: step 1/1. In terms of biological role, catalyzes a salvage reaction resulting in the formation of IMP that is energically less costly than de novo synthesis. The polypeptide is Hypoxanthine/guanine phosphoribosyltransferase (hpt) (Methanococcus maripaludis (strain DSM 14266 / JCM 13030 / NBRC 101832 / S2 / LL)).